A 201-amino-acid polypeptide reads, in one-letter code: Recombination protein RecR (201 aa).

Residues 57–72 (CADCRTFTEQEHCTIC) form a C4-type zinc finger. Positions 81-176 (GQICVVESPA…LASRIAHGVP (96 aa)) constitute a Toprim domain.

This sequence belongs to the RecR family.

Its function is as follows. May play a role in DNA repair. It seems to be involved in an RecBC-independent recombinational process of DNA repair. It may act with RecF and RecO. This Yersinia pestis bv. Antiqua (strain Antiqua) protein is Recombination protein RecR.